Consider the following 178-residue polypeptide: Large ribosomal subunit protein uL6 (178 aa).

It belongs to the universal ribosomal protein uL6 family. In terms of assembly, part of the 50S ribosomal subunit.

In terms of biological role, this protein binds to the 23S rRNA, and is important in its secondary structure. It is located near the subunit interface in the base of the L7/L12 stalk, and near the tRNA binding site of the peptidyltransferase center. The sequence is that of Large ribosomal subunit protein uL6 from Natranaerobius thermophilus (strain ATCC BAA-1301 / DSM 18059 / JW/NM-WN-LF).